A 305-amino-acid polypeptide reads, in one-letter code: ATP synthase gamma chain (305 aa).

This sequence belongs to the ATPase gamma chain family. In terms of assembly, F-type ATPases have 2 components, CF(1) - the catalytic core - and CF(0) - the membrane proton channel. CF(1) has five subunits: alpha(3), beta(3), gamma(1), delta(1), epsilon(1). CF(0) has three main subunits: a, b and c.

Its subcellular location is the cell membrane. Its function is as follows. Produces ATP from ADP in the presence of a proton gradient across the membrane. The gamma chain is believed to be important in regulating ATPase activity and the flow of protons through the CF(0) complex. The sequence is that of ATP synthase gamma chain from Streptomyces coelicolor (strain ATCC BAA-471 / A3(2) / M145).